The following is a 444-amino-acid chain: Methylenetetrahydrofolate--tRNA-(uracil-5-)-methyltransferase TrmFO (444 aa).

Residue 10 to 15 (GAGLAG) participates in FAD binding.

This sequence belongs to the MnmG family. TrmFO subfamily. The cofactor is FAD.

The protein resides in the cytoplasm. It catalyses the reaction uridine(54) in tRNA + (6R)-5,10-methylene-5,6,7,8-tetrahydrofolate + NADH + H(+) = 5-methyluridine(54) in tRNA + (6S)-5,6,7,8-tetrahydrofolate + NAD(+). The catalysed reaction is uridine(54) in tRNA + (6R)-5,10-methylene-5,6,7,8-tetrahydrofolate + NADPH + H(+) = 5-methyluridine(54) in tRNA + (6S)-5,6,7,8-tetrahydrofolate + NADP(+). Functionally, catalyzes the folate-dependent formation of 5-methyl-uridine at position 54 (M-5-U54) in all tRNAs. In Streptococcus pneumoniae (strain ATCC 700669 / Spain 23F-1), this protein is Methylenetetrahydrofolate--tRNA-(uracil-5-)-methyltransferase TrmFO.